Here is a 34-residue protein sequence, read N- to C-terminus: uncharacterized protein (34 aa).

This is an uncharacterized protein from Rhizobium radiobacter (Agrobacterium tumefaciens).